The following is a 354-amino-acid chain: MSCSLINEDFDLLKAAKNPGUGAKLSAGALDKLLKNFSVRNDDNLLVGFNTSDDAAVYKINDKTALISTIDFFPPVSGDPYIFGQVAAANSLSDIYAMGGEPKLALNLFCITKDMPEDMIKEILRGGFDKVYEAGAIVCGGHTIYDDSPKYGLAVNGFVHPKKILENSTAKEGDVLILTKPIGTGILLTASKADMSPPEELDRCYKIMAFLNAKARNIMVKYKINACTDITGFGLLGHLYEMGKGSGMSIEVDYKSVPIYKSVIESAEMGMMPAGVYSNRNFVGDNIVFENVPLAYQDLMFDPQTSGGLLISVDKEDAAALYEELSQALENTPCGKPAIIGLVTKRDEKILRVS.

Residue U21 is part of the active site. Residue U21 is a non-standard amino acid, selenocysteine. ATP contacts are provided by residues K24 and 51–53; that span reads TSD. D54 lines the Mg(2+) pocket. ATP contacts are provided by residues D71, D94, and 141–143; that span reads GHT. D94 serves as a coordination point for Mg(2+). D229 provides a ligand contact to Mg(2+).

It belongs to the selenophosphate synthase 1 family. Class I subfamily. Homodimer. It depends on Mg(2+) as a cofactor.

It catalyses the reaction hydrogenselenide + ATP + H2O = selenophosphate + AMP + phosphate + 2 H(+). In terms of biological role, synthesizes selenophosphate from selenide and ATP. The sequence is that of Selenide, water dikinase from Treponema denticola (strain ATCC 35405 / DSM 14222 / CIP 103919 / JCM 8153 / KCTC 15104).